The primary structure comprises 224 residues: Cytidylate kinase (224 aa).

An ATP-binding site is contributed by 9 to 17 (GPSGSGKGT).

It belongs to the cytidylate kinase family. Type 1 subfamily.

The protein localises to the cytoplasm. The catalysed reaction is CMP + ATP = CDP + ADP. It catalyses the reaction dCMP + ATP = dCDP + ADP. The chain is Cytidylate kinase from Saccharophagus degradans (strain 2-40 / ATCC 43961 / DSM 17024).